A 373-amino-acid chain; its full sequence is UDP-sugar transporter UST74c (373 aa).

The disordered stretch occupies residues 27–49 (LEEKMGGSADRSSLLDGSGSKEL). Serine 50 bears the Phosphoserine mark. 8 consecutive transmembrane segments (helical) span residues 89–111 (HFPSFLFLSLGQLTASIVVLGMG), 131–153 (FPLPLIFLGNMMFGLGGTKTLSL), 174–196 (ILGLRPSNAVQVSVYAMIGGALL), 206–225 (MRGYIYVMITNALTASNGVY), 238–260 (YGLMYYNSLFMFLPALALNYVTG), 275–297 (VFVVQFLLSCVMGFILSYSTILC), 302–324 (SALTTTIVGCLKNICVTYLGMFI), and 329–351 (VFSWLNCIGINISVLASLLYTYV).

It belongs to the TPT transporter family. SLC35D subfamily.

It is found in the golgi apparatus membrane. Its function is as follows. Involved in the import of UDP-sugars from the cytoplasm into the Golgi lumen. The polypeptide is UDP-sugar transporter UST74c (frc) (Drosophila melanogaster (Fruit fly)).